We begin with the raw amino-acid sequence, 782 residues long: Coiled-coil alpha-helical rod protein 1 (782 aa).

2 stretches are compositionally biased toward basic and acidic residues: residues 62–74 (ERDVSSDRQEPGR) and 208–218 (ETRRAGEAKEL). Disordered stretches follow at residues 62 to 82 (ERDVSSDRQEPGRRGRSWGLE) and 177 to 218 (EQLS…AKEL). Coiled coils occupy residues 111-303 (LRET…SLTH), 344-437 (LMVQ…NAVS), and 498-691 (VTDV…QQEG).

In terms of tissue distribution, found in all tissues tested, abundantly expressed in heart, liver, skeletal muscle, kidney and pancreas, and to a lesser extent in lung and placenta. Overexpressed in keratinocytes of psoriatic lesions.

Its subcellular location is the cytoplasm. The protein localises to the nucleus. Functionally, may be a regulator of keratinocyte proliferation or differentiation. This chain is Coiled-coil alpha-helical rod protein 1 (CCHCR1), found in Homo sapiens (Human).